The following is an 842-amino-acid chain: Translation initiation factor IF-2 (842 aa).

The tract at residues T121–V144 is disordered. A tr-type G domain is found at P340–K510. Residues G349–T356 are G1. A GTP-binding site is contributed by G349–T356. The interval G374–H378 is G2. Residues D396 to G399 form a G3 region. GTP is bound by residues D396–H400 and N450–D453. The G4 stretch occupies residues N450–D453. Residues S486 to K488 form a G5 region.

This sequence belongs to the TRAFAC class translation factor GTPase superfamily. Classic translation factor GTPase family. IF-2 subfamily.

It is found in the cytoplasm. Functionally, one of the essential components for the initiation of protein synthesis. Protects formylmethionyl-tRNA from spontaneous hydrolysis and promotes its binding to the 30S ribosomal subunits. Also involved in the hydrolysis of GTP during the formation of the 70S ribosomal complex. The polypeptide is Translation initiation factor IF-2 (Ehrlichia chaffeensis (strain ATCC CRL-10679 / Arkansas)).